The primary structure comprises 66 residues: uncharacterized protein (66 aa).

This sequence belongs to the YeeT/YkfH/YpjJ family.

This is an uncharacterized protein from Escherichia coli (strain K12).